Consider the following 166-residue polypeptide: Ribosome maturation factor RimP (166 aa).

It belongs to the RimP family.

The protein localises to the cytoplasm. Functionally, required for maturation of 30S ribosomal subunits. The polypeptide is Ribosome maturation factor RimP (Psychrobacter arcticus (strain DSM 17307 / VKM B-2377 / 273-4)).